Here is a 74-residue protein sequence, read N- to C-terminus: Putative membrane protein insertion efficiency factor (74 aa).

This sequence belongs to the UPF0161 family.

The protein localises to the cell inner membrane. Its function is as follows. Could be involved in insertion of integral membrane proteins into the membrane. This Endomicrobium trichonymphae protein is Putative membrane protein insertion efficiency factor.